Consider the following 898-residue polypeptide: Netrin receptor UNC5A (898 aa).

Residues 1-25 form the signal peptide; sequence MAVRPGLWPVLLGIVLAAWLRGSGA. Topologically, residues 26-361 are extracellular; the sequence is QQSATVANPV…TASCPEDVAL (336 aa). Positions 44-141 constitute an Ig-like domain; sequence PHFLVEPEDV…SGTTKSQKAY (98 aa). Cystine bridges form between cysteine 65–cysteine 126, cysteine 77–cysteine 124, and cysteine 170–cysteine 221. Asparagine 107 and asparagine 218 each carry an N-linked (GlcNAc...) asparagine glycan. In terms of domain architecture, Ig-like C2-type spans 155–238; the sequence is PLAKEVSLEQ…RRRSTSAAVI (84 aa). TSP type-1 domains follow at residues 242 to 296 and 298 to 350; these read NGGW…TLCP and DGSW…DLCL. C-linked (Man) tryptophan glycans are attached at residues tryptophan 245, tryptophan 248, and tryptophan 251. Disulfide bonds link cysteine 254/cysteine 291, cysteine 258/cysteine 295, and cysteine 269/cysteine 281. 2 C-linked (Man) tryptophan glycosylation sites follow: tryptophan 301 and tryptophan 304. 3 disulfides stabilise this stretch: cysteine 310/cysteine 344, cysteine 314/cysteine 349, and cysteine 322/cysteine 334. Asparagine 343 carries N-linked (GlcNAc...) asparagine glycosylation. The chain crosses the membrane as a helical span at residues 362–382; the sequence is YIGLVAVAVCLFLLLLALGLI. The Cytoplasmic portion of the chain corresponds to 383-898; that stretch reads YCRKKEGLDS…GLFTVSEAEC (516 aa). One can recognise a ZU5 domain in the interval 497–640; that stretch reads NMAYGTFNFL…LGRFALVGEA (144 aa). The interaction with DCC stretch occupies residues 661–679; sequence SLEYNIRVYCLHDTHDALK. The region spanning 817–897 is the Death domain; sequence QKIIASLDPP…AGLFTVSEAE (81 aa).

Belongs to the unc-5 family. In terms of assembly, homodimer and homooligomer. Interacts with the cytoplasmic part of DCC. Interacts with MAGED1. Interacts with PRKCABP, possibly mediating some interaction with PKC. Interacts (via extracellular domain) with FLRT2 (via extracellular domain). Interacts (via extracellular domain) with FLRT3 (via extracellular domain). In terms of processing, phosphorylated on cytoplasmic tyrosine residues. Phosphorylated by PKC in vitro. Post-translationally, proteolytically cleaved by caspases during apoptosis. The cleavage does not take place when the receptor is associated with netrin ligand. Its cleavage by caspases is required to induce apoptosis. The two extracellular TSRs of UNC5A contain WxxWxxWxxC motifs that can be C-mannosylated on all tryptophans. DPY19L1 preferentially mannosylates the first two tryptophans and DPY19L3 prefers the third. C-mannosylation by DPY19L1 is required for transport of UNC5A from the endoplasmic reticulum to the cell surface. Mainly expressed in regions of differentiating neurons. Expressed at early stages of neural tube development in the ventral spinal cord. In developing hindbrain, it colocalizes with a number of cranial motor neuron subpopulations from embryonic E11 to E14, while DCC is expressed by motor neurons at E12. Also expressed in non-neural structures, such as the basal plane of the hindbrain and midbrain, in the developing hypothalamus, thalamus and in the pallidum.

It localises to the cell membrane. The protein resides in the membrane raft. The protein localises to the cell projection. Its subcellular location is the neuron projection. Its function is as follows. Receptor for netrin required for axon guidance. Functions in the netrin signaling pathway and promotes neurite outgrowth in response to NTN1. Mediates axon repulsion of neuronal growth cones in the developing nervous system in response to netrin. Axon repulsion in growth cones may be mediated by its association with DCC that may trigger signaling for repulsion. It also acts as a dependence receptor required for apoptosis induction when not associated with netrin ligand. The chain is Netrin receptor UNC5A (Unc5a) from Rattus norvegicus (Rat).